The primary structure comprises 347 residues: Ribosomal RNA small subunit methyltransferase C (347 aa).

The protein belongs to the methyltransferase superfamily. RsmC family. In terms of assembly, monomer.

The protein resides in the cytoplasm. The catalysed reaction is guanosine(1207) in 16S rRNA + S-adenosyl-L-methionine = N(2)-methylguanosine(1207) in 16S rRNA + S-adenosyl-L-homocysteine + H(+). In terms of biological role, specifically methylates the guanine in position 1207 of 16S rRNA in the 30S particle. The protein is Ribosomal RNA small subunit methyltransferase C of Yersinia enterocolitica serotype O:8 / biotype 1B (strain NCTC 13174 / 8081).